A 202-amino-acid polypeptide reads, in one-letter code: Cytochrome c biogenesis ATP-binding export protein CcmA (202 aa).

In terms of domain architecture, ABC transporter spans 3 to 200; it reads LAAENLSGER…EGTQELKMGA (198 aa). ATP is bound at residue 35–42; sequence GPNGAGKS.

The protein belongs to the ABC transporter superfamily. CcmA exporter (TC 3.A.1.107) family. In terms of assembly, the complex is composed of two ATP-binding proteins (CcmA) and two transmembrane proteins (CcmB).

The protein resides in the cell inner membrane. It carries out the reaction heme b(in) + ATP + H2O = heme b(out) + ADP + phosphate + H(+). Functionally, part of the ABC transporter complex CcmAB involved in the biogenesis of c-type cytochromes; once thought to export heme, this seems not to be the case, but its exact role is uncertain. Responsible for energy coupling to the transport system. The polypeptide is Cytochrome c biogenesis ATP-binding export protein CcmA (Chelativorans sp. (strain BNC1)).